The sequence spans 638 residues: 1-deoxy-D-xylulose-5-phosphate synthase (638 aa).

Thiamine diphosphate-binding positions include histidine 78 and 119-121 (GHS). Aspartate 151 serves as a coordination point for Mg(2+). Residues 152–153 (GA), asparagine 180, tyrosine 289, and glutamate 371 contribute to the thiamine diphosphate site. Asparagine 180 is a binding site for Mg(2+).

It belongs to the transketolase family. DXPS subfamily. In terms of assembly, homodimer. The cofactor is Mg(2+). Thiamine diphosphate is required as a cofactor.

The enzyme catalyses D-glyceraldehyde 3-phosphate + pyruvate + H(+) = 1-deoxy-D-xylulose 5-phosphate + CO2. It participates in metabolic intermediate biosynthesis; 1-deoxy-D-xylulose 5-phosphate biosynthesis; 1-deoxy-D-xylulose 5-phosphate from D-glyceraldehyde 3-phosphate and pyruvate: step 1/1. In terms of biological role, catalyzes the acyloin condensation reaction between C atoms 2 and 3 of pyruvate and glyceraldehyde 3-phosphate to yield 1-deoxy-D-xylulose-5-phosphate (DXP). This Bartonella bacilliformis (strain ATCC 35685 / KC583 / Herrer 020/F12,63) protein is 1-deoxy-D-xylulose-5-phosphate synthase.